The following is a 216-amino-acid chain: Transmembrane emp24 domain-containing protein p24delta5 (216 aa).

An N-terminal signal peptide occupies residues 1 to 27 (MAINRIAHGSLFLTVVLFFLTVNYGEA). Over 28–183 (IWLTIPTTGG…REVSETTNSR (156 aa)) the chain is Lumenal. The 114-residue stretch at 38–151 (TKCVSEEIQS…IEGVELQLRR (114 aa)) folds into the GOLD domain. Residue Asn-86 is glycosylated (N-linked (GlcNAc...) asparagine). Residues 137–159 (AKKEKIEGVELQLRRLEGLVLSI) adopt a coiled-coil conformation. 2 positions are modified to omega-N-methylated arginine: Arg-169 and Arg-174. Residues 184 to 204 (VAWFSIMSLGVCVVVVGSQIL) form a helical membrane-spanning segment. Residues 205–216 (YLKRYFHKKKLI) lie on the Cytoplasmic side of the membrane. The short motif at 209–210 (YF) is the COPII vesicle coat-binding element. The short motif at 209 to 216 (YFHKKKLI) is the COPI vesicle coat-binding element.

The protein belongs to the EMP24/GP25L family. In terms of assembly, probably oligomerizes with other members of the EMP24/GP25L family. Associates with the COPI vesicle coat (coatomer). Associates with the COPII vesicle coat (coatomer). Interacts with p24beta2.

Its subcellular location is the endoplasmic reticulum membrane. Involved in vesicular protein trafficking. Mainly functions in the early secretory pathway. Thought to act as cargo receptor at the lumenal side for incorporation of secretory cargo molecules into transport vesicles and to be involved in vesicle coat formation at the cytoplasmic side. Interacts with p24beta2 at endoplasmic reticulum export sites for endoplasmic reticulum exit and coupled transport to the Golgi apparatus. Once in the Golgi, interacts very efficiently with the COPI machinery for retrograde transport back to the endoplasmic reticulum. The protein is Transmembrane emp24 domain-containing protein p24delta5 of Arabidopsis thaliana (Mouse-ear cress).